The chain runs to 277 residues: MAAVSVYERPVGGFSFDNCRRNAVLEADFAKKGYKLPTARKTGTTIAGVVYKDGIVLGADTRATEGMVVADKNCSKIHFISPNIYCCGAGTAADTDMTTQLISSNLELHSLSTGRLPRVVTANRMLKQMLFRYQGYIGAALVLGGVDVTGPHLYSIYPHGSTDKLPYVTMGSGSLAAMAVFEDKFRPDMEEEEAKKLVSEAIAAGIFNDLGSGSNIDLCVISKSKLDFLRPYSVPNKKGTRFGRYRCEKGTNAVLTEKVTTLEIEVLEETVQTMDTS.

Residues 1–43 (MAAVSVYERPVGGFSFDNCRRNAVLEADFAKKGYKLPTARKTG) constitute a propeptide, removed in mature form. Catalysis depends on T44, which acts as the Nucleophile.

This sequence belongs to the peptidase T1B family. As to quaternary structure, the 26S proteasome consists of a 20S proteasome core and two 19S regulatory subunits. The 20S proteasome core is a barrel-shaped complex made of 28 subunits that are arranged in four stacked rings. The two outer rings are each formed by seven alpha subunits, and the two inner rings are formed by seven beta subunits. The proteolytic activity is exerted by three beta-subunits PSMB5, PSMB6 and PSMB7.

The protein localises to the cytoplasm. It is found in the nucleus. It catalyses the reaction Cleavage of peptide bonds with very broad specificity.. In terms of biological role, component of the 20S core proteasome complex involved in the proteolytic degradation of most intracellular proteins. This complex plays numerous essential roles within the cell by associating with different regulatory particles. Associated with two 19S regulatory particles, forms the 26S proteasome and thus participates in the ATP-dependent degradation of ubiquitinated proteins. The 26S proteasome plays a key role in the maintenance of protein homeostasis by removing misfolded or damaged proteins that could impair cellular functions, and by removing proteins whose functions are no longer required. Associated with the PA200 or PA28, the 20S proteasome mediates ubiquitin-independent protein degradation. This type of proteolysis is required in several pathways including spermatogenesis (20S-PA200 complex) or generation of a subset of MHC class I-presented antigenic peptides (20S-PA28 complex). Within the 20S core complex, PSMB7 displays a trypsin-like activity. This Bos taurus (Bovine) protein is Proteasome subunit beta type-7 (PSMB7).